A 96-amino-acid polypeptide reads, in one-letter code: Interleukin-8 (96 aa).

The N-terminal stretch at 1-22 (MTSKLAIALLATFMLSAALCEA) is a signal peptide. Position 27 is a citrulline (Arg-27). 2 cysteine pairs are disulfide-bonded: Cys-34–Cys-61 and Cys-36–Cys-78.

It belongs to the intercrine alpha (chemokine CxC) family. As to quaternary structure, homodimer. Interacts with TNFAIP6 (via Link domain); this interaction interferes with chemokine binding to glycosaminoglycans. Citrullination at Arg-27 prevents proteolysis, and dampens tissue inflammation, it also enhances leukocytosis, possibly through impaired chemokine clearance from the blood circulation.

The protein localises to the secreted. Its function is as follows. Chemotactic factor that mediates inflammatory response by attracting neutrophils, basophils, and T-cells to clear pathogens and protect the host from infection. Also plays an important role in neutrophil activation. Released in response to an inflammatory stimulus, exerts its effect by binding to the G-protein-coupled receptors CXCR1 and CXCR2, primarily found in neutrophils, monocytes and endothelial cells. G-protein heterotrimer (alpha, beta, gamma subunits) constitutively binds to CXCR1/CXCR2 receptor and activation by IL8 leads to beta and gamma subunits release from Galpha (GNAI2 in neutrophils) and activation of several downstream signaling pathways including PI3K and MAPK pathways. This is Interleukin-8 (CXCL8) from Dasypus novemcinctus (Nine-banded armadillo).